Reading from the N-terminus, the 322-residue chain is Transcription factor WRKY45-2 (322 aa).

The tract at residues 67–110 is disordered; it reads GGEGSEVQSEVTCGGGASAGGKRKAPAANRKANCRRRTQQSSGN. Residues 112-180 constitute a DNA-binding region (WRKY); it reads VVVKNLDDGQ…YIGEHTCRDP (69 aa). A disordered region spans residues 256-284; sequence SDQEEVLSSLTPGSSAARGGGVAGPFGPD.

This sequence belongs to the WRKY group III family. In terms of tissue distribution, expressed in aleurone cells.

Its subcellular location is the nucleus. In terms of biological role, transcriptional activator involved in defense responses against pathogens. Acts as a positive regulator of defense responses against the rice blast fungus Magnaporthe oryzae. Acts as a positive regulator of defense responses against the bacterial blight Xanthomonas oryzae pv oryzae (Xoo) and the bacterial streak Xanthomonas oryzae pv oryzicola (Xoc). Acts as a positive regulator of abscisic acid (ABA) signaling that suppresses growth of seedlings. Acts as a negative regulator of salt stress response. Acts as a negative regulator of cold stress response. Acts as a negative regulator of drought stress response. This is Transcription factor WRKY45-2 from Oryza sativa subsp. indica (Rice).